Here is a 752-residue protein sequence, read N- to C-terminus: Maltodextrin phosphorylase (752 aa).

An N6-(pyridoxal phosphate)lysine modification is found at Lys603.

This sequence belongs to the glycogen phosphorylase family. Pyridoxal 5'-phosphate serves as cofactor.

The enzyme catalyses [(1-&gt;4)-alpha-D-glucosyl](n) + phosphate = [(1-&gt;4)-alpha-D-glucosyl](n-1) + alpha-D-glucose 1-phosphate. In terms of biological role, phosphorylase is an important allosteric enzyme in carbohydrate metabolism. Enzymes from different sources differ in their regulatory mechanisms and in their natural substrates. However, all known phosphorylases share catalytic and structural properties. In Streptococcus pneumoniae serotype 4 (strain ATCC BAA-334 / TIGR4), this protein is Maltodextrin phosphorylase (malP).